A 223-amino-acid chain; its full sequence is Sigma non-opioid intracellular receptor 1 (223 aa).

Residues 1–7 are Lumenal-facing; sequence MAVLSSR. Residues 8-29 form a helical membrane-spanning segment; the sequence is AMRAALGLAVLAVVIQLLRTWL. The Cytoplasmic portion of the chain corresponds to 30-223; that stretch reads SSKSYLFNQK…HTYLSELGLS (194 aa). The tract at residues 98–105 is important for ligand-binding; it reads SLTEYILL. The tract at residues 176–223 is C-terminal hydrophobic region; the sequence is FIPSTMGFALADTIFSTQDFCTLFYTFRIYARCLLLETHTYLSELGLS.

Belongs to the ERG2 family. As to quaternary structure, homotrimer.

The protein localises to the nucleus inner membrane. The protein resides in the nucleus outer membrane. It is found in the nucleus envelope. It localises to the cytoplasmic vesicle. Its subcellular location is the endoplasmic reticulum membrane. The protein localises to the membrane. Its function is as follows. May function in lipid transport from the endoplasmic reticulum and be involved in a wide array of cellular functions probably through regulation of the biogenesis of lipid microdomains at the plasma membrane. May regulate calcium efflux at the endoplasmic reticulum. In Taricha granulosa (Roughskin newt), this protein is Sigma non-opioid intracellular receptor 1 (SIGMAR1).